The chain runs to 109 residues: Nucleoid-associated protein Ping_2276 (109 aa).

It belongs to the YbaB/EbfC family. In terms of assembly, homodimer.

It is found in the cytoplasm. It localises to the nucleoid. Binds to DNA and alters its conformation. May be involved in regulation of gene expression, nucleoid organization and DNA protection. This Psychromonas ingrahamii (strain DSM 17664 / CCUG 51855 / 37) protein is Nucleoid-associated protein Ping_2276.